The following is a 205-amino-acid chain: N-(5'-phosphoribosyl)anthranilate isomerase (205 aa).

Belongs to the TrpF family.

It catalyses the reaction N-(5-phospho-beta-D-ribosyl)anthranilate = 1-(2-carboxyphenylamino)-1-deoxy-D-ribulose 5-phosphate. The protein operates within amino-acid biosynthesis; L-tryptophan biosynthesis; L-tryptophan from chorismate: step 3/5. This is N-(5'-phosphoribosyl)anthranilate isomerase from Marinomonas sp. (strain MWYL1).